A 354-amino-acid chain; its full sequence is Uroporphyrinogen decarboxylase (354 aa).

Substrate contacts are provided by residues 27-31, Asp77, Tyr154, Thr209, and His327; that span reads RQAGR.

Belongs to the uroporphyrinogen decarboxylase family. Homodimer.

It localises to the cytoplasm. The enzyme catalyses uroporphyrinogen III + 4 H(+) = coproporphyrinogen III + 4 CO2. It participates in porphyrin-containing compound metabolism; protoporphyrin-IX biosynthesis; coproporphyrinogen-III from 5-aminolevulinate: step 4/4. Its function is as follows. Catalyzes the decarboxylation of four acetate groups of uroporphyrinogen-III to yield coproporphyrinogen-III. This Histophilus somni (strain 129Pt) (Haemophilus somnus) protein is Uroporphyrinogen decarboxylase.